We begin with the raw amino-acid sequence, 225 residues long: MNSIKFPVLDRTTKNSVISTTLNDLSNWSELSSLWPLLYGTSCCFIEFASLIGSRFDFDRYGLVPRSSPRQADLILTAGTVTMKMAPSLVRLYEQMPEPKYVIAMGACTITGGMFSTDSYSTVRGVDKLIPVDVYLPGCPPKPEAVIDAITKLRKKIAREIYKDRIRPQQGNRCFTTNHKFFVVRSPHTGNYDQELLYPPSSTSEISTETFFKYKSPVSSHELVN.

4 residues coordinate [4Fe-4S] cluster: cysteine 43, cysteine 44, cysteine 108, and cysteine 139.

This sequence belongs to the complex I 20 kDa subunit family. NDH is composed of at least 16 different subunits, 5 of which are encoded in the nucleus. Requires [4Fe-4S] cluster as cofactor.

The protein localises to the plastid. The protein resides in the chloroplast thylakoid membrane. The catalysed reaction is a plastoquinone + NADH + (n+1) H(+)(in) = a plastoquinol + NAD(+) + n H(+)(out). The enzyme catalyses a plastoquinone + NADPH + (n+1) H(+)(in) = a plastoquinol + NADP(+) + n H(+)(out). Functionally, NDH shuttles electrons from NAD(P)H:plastoquinone, via FMN and iron-sulfur (Fe-S) centers, to quinones in the photosynthetic chain and possibly in a chloroplast respiratory chain. The immediate electron acceptor for the enzyme in this species is believed to be plastoquinone. Couples the redox reaction to proton translocation, and thus conserves the redox energy in a proton gradient. This Crucihimalaya wallichii (Rock-cress) protein is NAD(P)H-quinone oxidoreductase subunit K, chloroplastic.